A 297-amino-acid chain; its full sequence is uncharacterized protein (297 aa).

Disordered stretches follow at residues 1-20 (MDTLPPATSEESFEIPNADV), 39-100 (IEKD…ENLG), and 174-297 (VQKA…NEDQ). Residues 101-179 (NDLFVSGIAS…RVLNVQKAKR (79 aa)) enclose the RRM domain. The residue at position 184 (S184) is a Phosphoserine. 2 stretches are compositionally biased toward basic and acidic residues: residues 209–223 (GGYRRNNYRDRDSNR) and 233–253 (PQREHSPGNYRKERYNVDSRP). Over residues 254 to 263 (RRERHFHGRS) the composition is skewed to basic residues. Over residues 287 to 297 (SHSSVPPNEDQ) the composition is skewed to polar residues.

The protein localises to the nucleus. This is an uncharacterized protein from Schizosaccharomyces pombe (strain 972 / ATCC 24843) (Fission yeast).